A 750-amino-acid chain; its full sequence is uncharacterized protein (750 aa).

This is an uncharacterized protein from Escherichia coli O157:H7.